A 1094-amino-acid chain; its full sequence is MADPASPPSFDAIFAQQPVRRSSSTSTSSFANYTYSALQQHQQFNSDAPLVDEPQSLSEQARKQQRDPSKDGNNKRYLDMMSGLADGYGVINGRRQESLRKESLPFNPQEDSTLIATAPKRGERNGLGRNGYSSPIGDIMFGPEQTIPNQPQQPSQQPPWGEGRMSEQSVHYASVQQPQYSSFQSSGPGAGSAGIDYLPRGTTSSMNDSMLSSQISPYLNHDVASEGQPPQQQQQQQQQQQGEWGQEFIGVEQQQQYAQGEGQSNGMEDMLTMGDESPFESELQRVISNTSHPSQYPSRTSSPFPQQSQSNMVPASTVNQTRTESFPASRSPSPFAPQQASQTEASNHVVSTPSMGQPTYPRASSSPRTNPNSPFFNKPQSPPALIIPNSPVLPNIVTQSTSNNHSKGLNQPHTRHASNGAGGLFPPSNPALEHLTGMAGISPIAPNADGPMICIQPSTPISGLKEGRGLFDAALRRAGAARGAQRQGPQGQGESQEDRRQDGFNVPSPQSHPLPRTLSSDQVNQGVEMQGMDFAAQMQSYEQQGWANDTLRIAGPSRPRAKSDSIIPSPTADSFDRQAFLAFIGAGNAQPPPPNVEMQPGYVDVSEQWRNTVSAWKAGLGEGELNSQPTLDPRLLPGRESNEAVYQQLLMQQQTGQMPRLDPDQLHQLTQLEGQRARFSLNTNIAPPKYEPGEISPTSMVFYQSMGLYPHAAPELSGTVSAPWSQTAFGQVPGPGPVGHPATAGPAQQHFLTPTLSHATVRRRSFGGGEHPAMGAGTPGYGMEFSSPFAGKSVGQIRGVNMGHRRAARSEDFGRGGTGWGVGAGGSTAEFLQSITGDDGSLLPPSNRGHAMSHSRHSSTSSIRSASPALSISSQGSSFSHHSPRMDMPDSIYPGHPIIAPATPLQVSGLYEEQQTPARVAKMKVTSVATEVASTSRRTNSGIFKCPVPGCGSTFTRHFNLKGHLRSHNDERPFKCLYEGCPKAIVGFARQHDCKRHMLLHEGLRLFECEGCGKKFARLDALTRHHKSEQGQECAITHPLPTNFDGSPMSESQYKTYKGIKSTPEGSGRRLSSTASGSGSGKRRSKKSETSEED.

Disordered regions lie at residues 1-29 (MADPASPPSFDAIFAQQPVRRSSSTSTSS), 44-81 (FNSDAPLVDEPQSLSEQARKQQRDPSKDGNNKRYLDMM), 93-428 (GRRQ…FPPS), and 477-519 (RAGA…RTLS). 2 stretches are compositionally biased toward basic and acidic residues: residues 60 to 78 (QARKQQRDPSKDGNNKRYL) and 94 to 103 (RRQESLRKES). Ser-103 is modified (phosphoserine). The span at 148-159 (PNQPQQPSQQPP) shows a compositional bias: low complexity. 2 stretches are compositionally biased toward polar residues: residues 166–187 (SEQSVHYASVQQPQYSSFQSSG) and 201–217 (GTTSSMNDSMLSSQISP). Low complexity-rich tracts occupy residues 228–241 (QPPQQQQQQQQQQQ) and 252–262 (EQQQQYAQGEG). The segment covering 286 to 324 (VISNTSHPSQYPSRTSSPFPQQSQSNMVPASTVNQTRTE) has biased composition (polar residues). Ser-288 and Ser-329 each carry phosphoserine. Low complexity predominate over residues 325-342 (SFPASRSPSPFAPQQASQ). Polar residues-rich tracts occupy residues 343 to 379 (TEASNHVVSTPSMGQPTYPRASSSPRTNPNSPFFNKP) and 396 to 412 (IVTQSTSNNHSKGLNQP). Low complexity predominate over residues 477-493 (RAGAARGAQRQGPQGQG). Residues 507–519 (PSPQSHPLPRTLS) show a composition bias toward polar residues. 4 positions are modified to phosphoserine: Ser-508, Ser-569, Ser-765, and Ser-810. The disordered stretch occupies residues 835 to 888 (ITGDDGSLLPPSNRGHAMSHSRHSSTSSIRSASPALSISSQGSSFSHHSPRMDM). The segment covering 858 to 881 (SSTSSIRSASPALSISSQGSSFSH) has biased composition (low complexity). The segment at 944–968 (FKCPVPGCGSTFTRHFNLKGHLRSH) adopts a C2H2-type 1 zinc-finger fold. Residues 1007–1029 (FECEGCGKKFARLDALTRHHKSE) form a C2H2-type 2; degenerate zinc finger. The disordered stretch occupies residues 1037–1094 (THPLPTNFDGSPMSESQYKTYKGIKSTPEGSGRRLSSTASGSGSGKRRSKKSETSEED).

In terms of processing, phosphorylated. Dephosphorylated by calcineurin (CNA1) which promotes nuclear localization.

The protein resides in the cytoplasm. Its subcellular location is the cytosol. It localises to the nucleus. Its function is as follows. DNA-binding transcriptional activator that interacts with calcineurin-dependent response element (CDRE) promoters. Activates expression of genes required to maintain cell wall integrity during stress. Activates expression of genes required for transepithelial migration through the host blood-brain barrier. Required for adaptation to host temperature during infection. The chain is Transcriptional regulator CRZ1 from Cryptococcus neoformans var. grubii serotype A (strain H99 / ATCC 208821 / CBS 10515 / FGSC 9487) (Filobasidiella neoformans var. grubii).